The chain runs to 297 residues: Formylmethanofuran--tetrahydromethanopterin formyltransferase-like protein (297 aa).

This sequence belongs to the FTR family.

The polypeptide is Formylmethanofuran--tetrahydromethanopterin formyltransferase-like protein (ehaS) (Methanothermobacter thermautotrophicus (strain ATCC 29096 / DSM 1053 / JCM 10044 / NBRC 100330 / Delta H) (Methanobacterium thermoautotrophicum)).